Here is a 757-residue protein sequence, read N- to C-terminus: Polyribonucleotide nucleotidyltransferase (757 aa).

Aspartate 482 and aspartate 488 together coordinate Mg(2+). One can recognise a KH domain in the interval 549–608 (PRMLSFYIDKDKISAAIGSKGKNIRSVCERSNAKIEIGDDGKVSVFATSGTEAEIAKSMM). The S1 motif domain occupies 618-686 (GSIVDVKVVR…KGGCPKLSRR (69 aa)). Positions 698–757 (GELYNEERKDGPNDRDNYYNNSFSRKPGGSHHKRPPRPHSGFSNRNRPKFGNNDSSSGFY) are disordered. Positions 702 to 714 (NEERKDGPNDRDN) are enriched in basic and acidic residues. Basic residues predominate over residues 725–734 (GGSHHKRPPR).

This sequence belongs to the polyribonucleotide nucleotidyltransferase family. Requires Mg(2+) as cofactor.

The protein localises to the cytoplasm. The catalysed reaction is RNA(n+1) + phosphate = RNA(n) + a ribonucleoside 5'-diphosphate. Functionally, involved in mRNA degradation. Catalyzes the phosphorolysis of single-stranded polyribonucleotides processively in the 3'- to 5'-direction. This chain is Polyribonucleotide nucleotidyltransferase, found in Wolbachia pipientis wMel.